A 126-amino-acid chain; its full sequence is Large ribosomal subunit protein mL52 (126 aa).

The transit peptide at 1–28 (MLKITKICLASSATSTAQRSIALTAPRA) directs the protein to the mitochondrion.

The protein belongs to the mitochondrion-specific ribosomal protein mL52 family. In terms of assembly, component of the mitochondrial ribosome large subunit (39S) which comprises a 16S rRNA and about 50 distinct proteins.

It localises to the mitochondrion. The sequence is that of Large ribosomal subunit protein mL52 (mRpL52) from Drosophila melanogaster (Fruit fly).